Here is a 318-residue protein sequence, read N- to C-terminus: Beta-ketoacyl-[acyl-carrier-protein] synthase III (318 aa).

Catalysis depends on residues Cys113 and His245. The interval 246 to 250 (QANIR) is ACP-binding. Asn275 is an active-site residue.

This sequence belongs to the thiolase-like superfamily. FabH family. As to quaternary structure, homodimer.

The protein localises to the cytoplasm. It carries out the reaction malonyl-[ACP] + acetyl-CoA + H(+) = 3-oxobutanoyl-[ACP] + CO2 + CoA. It functions in the pathway lipid metabolism; fatty acid biosynthesis. Catalyzes the condensation reaction of fatty acid synthesis by the addition to an acyl acceptor of two carbons from malonyl-ACP. Catalyzes the first condensation reaction which initiates fatty acid synthesis and may therefore play a role in governing the total rate of fatty acid production. Possesses both acetoacetyl-ACP synthase and acetyl transacylase activities. Its substrate specificity determines the biosynthesis of branched-chain and/or straight-chain of fatty acids. The chain is Beta-ketoacyl-[acyl-carrier-protein] synthase III from Wolbachia pipientis wMel.